A 198-amino-acid chain; its full sequence is Na(+)-translocating NADH-quinone reductase subunit E (198 aa).

6 consecutive transmembrane segments (helical) span residues 11–31 (SVFI…FLAV), 35–55 (VSTA…SVPV), 77–97 (FLNF…LEMI), 110–130 (GIFL…SFMV), 140–160 (IVYG…LAGI), and 176–196 (LGIT…FSGV).

This sequence belongs to the NqrDE/RnfAE family. In terms of assembly, composed of six subunits; NqrA, NqrB, NqrC, NqrD, NqrE and NqrF.

Its subcellular location is the cell inner membrane. The enzyme catalyses a ubiquinone + n Na(+)(in) + NADH + H(+) = a ubiquinol + n Na(+)(out) + NAD(+). In terms of biological role, NQR complex catalyzes the reduction of ubiquinone-1 to ubiquinol by two successive reactions, coupled with the transport of Na(+) ions from the cytoplasm to the periplasm. NqrA to NqrE are probably involved in the second step, the conversion of ubisemiquinone to ubiquinol. The polypeptide is Na(+)-translocating NADH-quinone reductase subunit E (Histophilus somni (strain 2336) (Haemophilus somnus)).